The following is a 191-amino-acid chain: Fe/S biogenesis protein NfuA (191 aa).

The [4Fe-4S] cluster site is built by C149 and C152.

This sequence belongs to the NfuA family. As to quaternary structure, homodimer. It depends on [4Fe-4S] cluster as a cofactor.

Its function is as follows. Involved in iron-sulfur cluster biogenesis. Binds a 4Fe-4S cluster, can transfer this cluster to apoproteins, and thereby intervenes in the maturation of Fe/S proteins. Could also act as a scaffold/chaperone for damaged Fe/S proteins. The sequence is that of Fe/S biogenesis protein NfuA from Citrobacter koseri (strain ATCC BAA-895 / CDC 4225-83 / SGSC4696).